The following is a 544-amino-acid chain: Chaperonin GroEL (544 aa).

ATP contacts are provided by residues 30–33, K51, 87–91, G415, and D496; these read TLGP and DGTTT.

The protein belongs to the chaperonin (HSP60) family. Forms a cylinder of 14 subunits composed of two heptameric rings stacked back-to-back. Interacts with the co-chaperonin GroES.

It is found in the cytoplasm. The enzyme catalyses ATP + H2O + a folded polypeptide = ADP + phosphate + an unfolded polypeptide.. Its function is as follows. Together with its co-chaperonin GroES, plays an essential role in assisting protein folding. The GroEL-GroES system forms a nano-cage that allows encapsulation of the non-native substrate proteins and provides a physical environment optimized to promote and accelerate protein folding. This is Chaperonin GroEL from Granulibacter bethesdensis (strain ATCC BAA-1260 / CGDNIH1).